Consider the following 639-residue polypeptide: Threonine--tRNA ligase (639 aa).

The TGS domain maps to 1 to 62; sequence MYQLTLPDKS…ETDANIEVLT (62 aa). The interval 246–537 is catalytic; the sequence is DHRKIGKELD…LIEHYEGKFP (292 aa). Residues cysteine 337, histidine 388, and histidine 514 each coordinate Zn(2+).

It belongs to the class-II aminoacyl-tRNA synthetase family. As to quaternary structure, homodimer. The cofactor is Zn(2+).

The protein resides in the cytoplasm. It catalyses the reaction tRNA(Thr) + L-threonine + ATP = L-threonyl-tRNA(Thr) + AMP + diphosphate + H(+). In terms of biological role, catalyzes the attachment of threonine to tRNA(Thr) in a two-step reaction: L-threonine is first activated by ATP to form Thr-AMP and then transferred to the acceptor end of tRNA(Thr). Also edits incorrectly charged L-seryl-tRNA(Thr). This is Threonine--tRNA ligase from Leptospira borgpetersenii serovar Hardjo-bovis (strain JB197).